Reading from the N-terminus, the 502-residue chain is Hippocampus abundant transcript-like protein 1 (502 aa).

Basic and acidic residues predominate over residues 1-12; that stretch reads MNAEPPEEKAAS. Residues 1-27 form a disordered region; the sequence is MNAEPPEEKAASEAEAGAMPEKRAGSR. Residues 1–46 lie on the Extracellular side of the membrane; the sequence is MNAEPPEEKAASEAEAGAMPEKRAGSRAAGGNSLQGFGRPSVYHAA. Residues 47-67 form a helical membrane-spanning segment; it reads IVIFLEFFAWGLLTTSMLTVL. Residues 68–79 lie on the Cytoplasmic side of the membrane; it reads HETFPQHTFLMN. Residues 80-100 form a helical membrane-spanning segment; sequence GLIQGVKGLLSFLSAPLIGAL. Residues 101–108 are Extracellular-facing; that stretch reads SDVWGRKP. Residues 109 to 129 traverse the membrane as a helical segment; it reads FLLGTVFFTCFPIPLMRISPW. Residues 130–131 are Cytoplasmic-facing; sequence WY. The helical transmembrane segment at 132–152 threads the bilayer; sequence FAMISISGVFSVTFSVIFAYV. Over 153 to 165 the chain is Extracellular; that stretch reads ADVTQEHERSTAY. Residues 166 to 186 traverse the membrane as a helical segment; the sequence is GWVSATFAASLVSSPAIGAYL. The Cytoplasmic portion of the chain corresponds to 187–193; the sequence is SASYGDS. The chain crosses the membrane as a helical span at residues 194–214; sequence LVVLVATVVALLDICFILLAV. Topologically, residues 215–248 are extracellular; sequence PESLPEKMRPLSWGARISWKQADPFASLKKVGKD. A helical membrane pass occupies residues 249 to 269; sequence STILLICITVFLSYLPEAGQY. Residues 270–278 lie on the Cytoplasmic side of the membrane; sequence SSFFLYLRQ. The helical transmembrane segment at 279-299 threads the bilayer; it reads VIGFGSIKIAAFIAMVGILSI. Residues 300 to 316 lie on the Extracellular side of the membrane; that stretch reads VAQTVFLTSLMRSLGNK. The chain crosses the membrane as a helical span at residues 317–337; that stretch reads NTVLLGLGFQMFQLAWYGFGS. Position 338 (Gln338) is a topological domain, cytoplasmic. The helical transmembrane segment at 339-359 threads the bilayer; it reads AWMMWAAGIVAAVSSITFPAV. At 360–384 the chain is on the extracellular side; sequence STLVSQNADSNQQGVAQGIITGIRG. A helical transmembrane segment spans residues 385 to 405; sequence LCNGLGPALYGFIFYMFHVEL. At 406 to 425 the chain is on the cytoplasmic side; sequence TELEPELISNNAALQGAVIP. A helical transmembrane segment spans residues 426–446; it reads GPPFLFGACIVFMSFLVAVFI. Topologically, residues 447 to 502 are extracellular; the sequence is PEYSKGGIQKHSNSISGSLANTPERGSDEDIEPLLQDSSIWELSSLEEPGHQCTEL.

It belongs to the major facilitator superfamily.

The protein resides in the membrane. This is Hippocampus abundant transcript-like protein 1 from Bos taurus (Bovine).